A 296-amino-acid chain; its full sequence is 5,10-methylenetetrahydrofolate reductase (296 aa).

Glu28 (proton donor/acceptor) is an active-site residue. Thr59 is a binding site for NADH. Residues Tyr60, Ala62, His88, Arg118, Gly119, Asp120, Ala132, Tyr152, His156, Ala159, Asp165, Asn168, Arg171, and Lys172 each contribute to the FAD site. Asp120 is a (6S)-5-methyl-5,6,7,8-tetrahydrofolate binding site. Gln183 lines the NADH pocket. Residues Gln183, Gln219, and Arg279 each coordinate (6S)-5-methyl-5,6,7,8-tetrahydrofolate.

The protein belongs to the methylenetetrahydrofolate reductase family. It depends on FAD as a cofactor.

The enzyme catalyses (6S)-5-methyl-5,6,7,8-tetrahydrofolate + NAD(+) = (6R)-5,10-methylene-5,6,7,8-tetrahydrofolate + NADH + H(+). Its pathway is one-carbon metabolism; tetrahydrofolate interconversion. It participates in amino-acid biosynthesis; L-methionine biosynthesis via de novo pathway. Catalyzes the NADH-dependent reduction of 5,10-methylenetetrahydrofolate to 5-methyltetrahydrofolate. Is required to provide the methyl group necessary for methionine synthetase to convert homocysteine to methionine; the methyl group is given by 5-methyltetrahydrofolate. This is 5,10-methylenetetrahydrofolate reductase (metF) from Salmonella typhimurium (strain LT2 / SGSC1412 / ATCC 700720).